The following is a 129-amino-acid chain: Prefoldin subunit 6 (129 aa).

The residue at position 2 (A2) is an N-acetylalanine. K21 is modified (N6-acetyllysine). K66 is subject to N6-acetyllysine; alternate. K66 is covalently cross-linked (Glycyl lysine isopeptide (Lys-Gly) (interchain with G-Cter in SUMO1); alternate). A Glycyl lysine isopeptide (Lys-Gly) (interchain with G-Cter in SUMO2); alternate cross-link involves residue K66.

It belongs to the prefoldin subunit beta family. In terms of assembly, heterohexamer of two PFD-alpha type and four PFD-beta type subunits. Component of the PAQosome complex which is responsible for the biogenesis of several protein complexes and which consists of R2TP complex members RUVBL1, RUVBL2, RPAP3 and PIH1D1, URI complex members PFDN2, PFDN6, PDRG1, UXT and URI1 as well as ASDURF, POLR2E and DNAAF10/WDR92.

Binds specifically to cytosolic chaperonin (c-CPN) and transfers target proteins to it. Binds to nascent polypeptide chain and promotes folding in an environment in which there are many competing pathways for nonnative proteins. The polypeptide is Prefoldin subunit 6 (PFDN6) (Canis lupus familiaris (Dog)).